A 210-amino-acid polypeptide reads, in one-letter code: Imidazole glycerol phosphate synthase subunit HisH (210 aa).

Residues 1-210 (MIAILDYGMG…KLLENFIRFI (210 aa)) enclose the Glutamine amidotransferase type-1 domain. The active-site Nucleophile is C79. Catalysis depends on residues H191 and E193.

As to quaternary structure, heterodimer of HisH and HisF.

It localises to the cytoplasm. The catalysed reaction is 5-[(5-phospho-1-deoxy-D-ribulos-1-ylimino)methylamino]-1-(5-phospho-beta-D-ribosyl)imidazole-4-carboxamide + L-glutamine = D-erythro-1-(imidazol-4-yl)glycerol 3-phosphate + 5-amino-1-(5-phospho-beta-D-ribosyl)imidazole-4-carboxamide + L-glutamate + H(+). The enzyme catalyses L-glutamine + H2O = L-glutamate + NH4(+). It participates in amino-acid biosynthesis; L-histidine biosynthesis; L-histidine from 5-phospho-alpha-D-ribose 1-diphosphate: step 5/9. Its function is as follows. IGPS catalyzes the conversion of PRFAR and glutamine to IGP, AICAR and glutamate. The HisH subunit catalyzes the hydrolysis of glutamine to glutamate and ammonia as part of the synthesis of IGP and AICAR. The resulting ammonia molecule is channeled to the active site of HisF. The protein is Imidazole glycerol phosphate synthase subunit HisH of Leptospira interrogans serogroup Icterohaemorrhagiae serovar copenhageni (strain Fiocruz L1-130).